Here is a 330-residue protein sequence, read N- to C-terminus: tRNA U34 carboxymethyltransferase (330 aa).

Carboxy-S-adenosyl-L-methionine is bound by residues K91, W105, K110, G130, 152 to 154 (DPS), 181 to 182 (IE), M196, Y200, and R315.

The protein belongs to the class I-like SAM-binding methyltransferase superfamily. CmoB family. Homotetramer.

The catalysed reaction is carboxy-S-adenosyl-L-methionine + 5-hydroxyuridine(34) in tRNA = 5-carboxymethoxyuridine(34) in tRNA + S-adenosyl-L-homocysteine + H(+). Its function is as follows. Catalyzes carboxymethyl transfer from carboxy-S-adenosyl-L-methionine (Cx-SAM) to 5-hydroxyuridine (ho5U) to form 5-carboxymethoxyuridine (cmo5U) at position 34 in tRNAs. This chain is tRNA U34 carboxymethyltransferase, found in Shewanella pealeana (strain ATCC 700345 / ANG-SQ1).